Here is a 295-residue protein sequence, read N- to C-terminus: Protein PHR1-LIKE 2 (295 aa).

The HTH myb-type domain maps to 38–98 (TDPKPRLRWT…HLQKFRLGRQ (61 aa)). A DNA-binding region (H-T-H motif) is located at residues 69-94 (PKTIMRTMGVKGLTLYHLKSHLQKFR). Positions 96–138 (GRQAGKESTENSKDASCVGESQDTGSSSTSSMRMAQQEQNEGY) are disordered. Residues 99-108 (AGKESTENSK) show a composition bias toward basic and acidic residues. The segment covering 127 to 138 (MRMAQQEQNEGY) has biased composition (polar residues). A coiled-coil region spans residues 141–161 (TEALRAQMEVQRRLHDQLEVQ). Residues 154 to 159 (LHDQLE) carry the LHEQLE motif.

The protein belongs to the MYB-CC family. In terms of assembly, homo- and heterodimers. Interacts with PHL3, but not with PHR1.

It localises to the nucleus. In terms of biological role, transcriptional activator. Acts redundantly with PHR1 as a key component of the central regulatory system controlling transcriptional responses to Pi starvation. Binds in a sequence-specific manner to phosphate starvation-regulated promoters. The protein is Protein PHR1-LIKE 2 of Arabidopsis thaliana (Mouse-ear cress).